The primary structure comprises 411 residues: Multifunctional CCA protein (411 aa).

The ATP site is built by Gly8 and Arg11. Gly8 and Arg11 together coordinate CTP. Residues Asp21 and Asp23 each contribute to the Mg(2+) site. ATP is bound by residues Arg91, Arg137, and Arg140. The CTP site is built by Arg91, Arg137, and Arg140. The HD domain occupies 226–327 (TGVHVMLVID…LRFLQETDAL (102 aa)).

The protein belongs to the tRNA nucleotidyltransferase/poly(A) polymerase family. Bacterial CCA-adding enzyme type 1 subfamily. As to quaternary structure, monomer. Can also form homodimers and oligomers. Mg(2+) serves as cofactor. Ni(2+) is required as a cofactor.

It carries out the reaction a tRNA precursor + 2 CTP + ATP = a tRNA with a 3' CCA end + 3 diphosphate. The enzyme catalyses a tRNA with a 3' CCA end + 2 CTP + ATP = a tRNA with a 3' CCACCA end + 3 diphosphate. In terms of biological role, catalyzes the addition and repair of the essential 3'-terminal CCA sequence in tRNAs without using a nucleic acid template. Adds these three nucleotides in the order of C, C, and A to the tRNA nucleotide-73, using CTP and ATP as substrates and producing inorganic pyrophosphate. tRNA 3'-terminal CCA addition is required both for tRNA processing and repair. Also involved in tRNA surveillance by mediating tandem CCA addition to generate a CCACCA at the 3' terminus of unstable tRNAs. While stable tRNAs receive only 3'-terminal CCA, unstable tRNAs are marked with CCACCA and rapidly degraded. The polypeptide is Multifunctional CCA protein (Methylobacillus flagellatus (strain ATCC 51484 / DSM 6875 / VKM B-1610 / KT)).